Consider the following 173-residue polypeptide: Probable F-box protein At1g27490 (173 aa).

Residues 1–46 (MEWSLPVDLQEEILSRVPAKSLARWKSTPKQWKGPISIEFLHLLRS) form the F-box domain.

This Arabidopsis thaliana (Mouse-ear cress) protein is Probable F-box protein At1g27490.